We begin with the raw amino-acid sequence, 245 residues long: ATP synthase subunit a (245 aa).

The next 7 membrane-spanning stretches (helical) occupy residues 5–25, 37–57, 99–119, 125–145, 157–177, 187–209, and 221–241; these read LWFT…MMSV, ISNY…FFIA, YIVT…IPGF, FPSV…VHGL, FLGP…CSHF, LYAN…PLGF, and SLIQ…EATA.

It belongs to the ATPase A chain family. In terms of assembly, F-type ATPases have 2 components, CF(1) - the catalytic core - and CF(0) - the membrane proton channel. CF(1) has five subunits: alpha(3), beta(3), gamma(1), delta(1), epsilon(1). CF(0) has three main subunits: a(1), b(2) and c(9-12). The alpha and beta chains form an alternating ring which encloses part of the gamma chain. CF(1) is attached to CF(0) by a central stalk formed by the gamma and epsilon chains, while a peripheral stalk is formed by the delta and b chains.

The protein localises to the cell inner membrane. Key component of the proton channel; it plays a direct role in the translocation of protons across the membrane. The protein is ATP synthase subunit a of Koribacter versatilis (strain Ellin345).